The sequence spans 1214 residues: Delta-latroinsectotoxin-Lt1a (1214 aa).

Residues Ile64–Ser89 form a helix H2 is the probable transmembrane region of the tetrameric pore inserted in the target cell membrane region. A helix H8 is the probable transmembrane region of the tetrameric pore inserted in the target cell membrane region spans residues Ala250 to Leu269. 15 ANK repeats span residues Asp464–Ala497, Asn501–Leu532, Asn536–Ala565, Thr570–Glu600, Asp604–Ala633, Ser637–Ile666, Asn670–Ile699, Asn706–Leu734, Gly740–Glu769, Glu773–Ala802, Asp806–Ala835, Asp839–Glu868, Asn872–Asp901, Glu906–Glu936, and Val966–Ser994. Positions Ile1020–Arg1214 are cleaved as a propeptide — C-terminal domain cleavage is required for toxin activation.

Belongs to the cationic peptide 01 (latrotoxin) family. 04 (delta-latroinsectotoxin) subfamily. Homotetramer in membrane. In terms of tissue distribution, expressed by the venom gland.

It is found in the secreted. The protein localises to the target cell membrane. Functionally, insecticidal presynaptic neurotoxin that induces massive neurotransmitter release at insect (but not vertebrate) neuromuscular junctions. Native toxin forms cation-permeable pores (with high permeability to calcium) in lipid membranes locust muscle membrane and artificial lipid bilayers. May bind to insect neurexin-1 homolog, insect adhesion G protein-coupled receptor L1 homolog, and insect receptor-type tyrosine-protein phosphatase S homolog, and induces neurotransmitter exocytosis both by forming tetrameric pores in membranes and signaling via G protein-coupled receptor. Oligomerization is a process independent of divalent cations. The polypeptide is Delta-latroinsectotoxin-Lt1a (Latrodectus tredecimguttatus (Mediterranean black widow spider)).